The sequence spans 314 residues: Vacuolar membrane protein FOSTERSB_4073 (314 aa).

The interval K32–A60 is disordered. A helical transmembrane segment spans residues V93–L113. 3 positions are modified to phosphoserine: S148, S254, and S274. Residues E240–N309 are disordered. Over residues S254 to H269 the composition is skewed to basic and acidic residues.

This sequence belongs to the PRM5 family.

It localises to the vacuole membrane. The chain is Vacuolar membrane protein FOSTERSB_4073 from Saccharomyces cerevisiae (strain FostersB) (Baker's yeast).